The chain runs to 98 residues: uncharacterized protein (98 aa).

It belongs to the Rv1128c/1148c/1588c/1702c/1945/3466 family.

This is an uncharacterized protein from Mycobacterium tuberculosis (strain ATCC 25618 / H37Rv).